Reading from the N-terminus, the 858-residue chain is Leucine--tRNA ligase (858 aa).

Residues 42–52 carry the 'HIGH' region motif; sequence PYPSGRLHMGH. A 'KMSKS' region motif is present at residues 618–622; that stretch reads KMSKS. Lys-621 is a binding site for ATP.

It belongs to the class-I aminoacyl-tRNA synthetase family.

The protein resides in the cytoplasm. It catalyses the reaction tRNA(Leu) + L-leucine + ATP = L-leucyl-tRNA(Leu) + AMP + diphosphate. In Aliivibrio fischeri (strain MJ11) (Vibrio fischeri), this protein is Leucine--tRNA ligase.